The following is a 151-amino-acid chain: Sec-independent protein translocase protein TatB (151 aa).

The helical transmembrane segment at 1–21 (MFGMSLPEIIIIAVIAVIFLG) threads the bilayer. Residues 120–131 (NNDPLNNETLNE) show a composition bias toward low complexity. The interval 120-151 (NNDPLNNETLNEQPSKPSPNLNLENKEIKKEA) is disordered. Over residues 132–142 (QPSKPSPNLNL) the composition is skewed to polar residues.

The protein belongs to the TatB family. The Tat system comprises two distinct complexes: a TatABC complex, containing multiple copies of TatA, TatB and TatC subunits, and a separate TatA complex, containing only TatA subunits. Substrates initially bind to the TatABC complex, which probably triggers association of the separate TatA complex to form the active translocon.

It is found in the cell inner membrane. Functionally, part of the twin-arginine translocation (Tat) system that transports large folded proteins containing a characteristic twin-arginine motif in their signal peptide across membranes. Together with TatC, TatB is part of a receptor directly interacting with Tat signal peptides. TatB may form an oligomeric binding site that transiently accommodates folded Tat precursor proteins before their translocation. In Campylobacter fetus subsp. fetus (strain 82-40), this protein is Sec-independent protein translocase protein TatB.